The sequence spans 269 residues: Shikimate dehydrogenase (NADP(+)) (269 aa).

Shikimate contacts are provided by residues 17–19 (SKS) and threonine 64. Lysine 68 (proton acceptor) is an active-site residue. Glutamate 80 provides a ligand contact to NADP(+). Positions 89 and 105 each coordinate shikimate. NADP(+)-binding positions include 130–134 (GAGGA), 154–159 (NRTHTK), and methionine 213. Tyrosine 215 is a binding site for shikimate. Glycine 237 is an NADP(+) binding site.

This sequence belongs to the shikimate dehydrogenase family. As to quaternary structure, homodimer.

The enzyme catalyses shikimate + NADP(+) = 3-dehydroshikimate + NADPH + H(+). It functions in the pathway metabolic intermediate biosynthesis; chorismate biosynthesis; chorismate from D-erythrose 4-phosphate and phosphoenolpyruvate: step 4/7. Functionally, involved in the biosynthesis of the chorismate, which leads to the biosynthesis of aromatic amino acids. Catalyzes the reversible NADPH linked reduction of 3-dehydroshikimate (DHSA) to yield shikimate (SA). In Neisseria mucosa, this protein is Shikimate dehydrogenase (NADP(+)).